The following is a 483-amino-acid chain: GTPase Der (483 aa).

2 EngA-type G domains span residues 3–167 and 212–387; these read FTVA…GEER and LRIA…EIWN. GTP-binding positions include 9-16, 56-60, 119-122, 218-225, 265-269, and 330-333; these read GRPNVGKS, DTAGL, NKAE, GRPNAGKS, and NKWD. The KH-like domain occupies 388–472; the sequence is RRVSTGRLNR…PIRLSLRTSD (85 aa).

This sequence belongs to the TRAFAC class TrmE-Era-EngA-EngB-Septin-like GTPase superfamily. EngA (Der) GTPase family. In terms of assembly, associates with the 50S ribosomal subunit.

GTPase that plays an essential role in the late steps of ribosome biogenesis. The protein is GTPase Der of Brucella anthropi (strain ATCC 49188 / DSM 6882 / CCUG 24695 / JCM 21032 / LMG 3331 / NBRC 15819 / NCTC 12168 / Alc 37) (Ochrobactrum anthropi).